A 497-amino-acid chain; its full sequence is Kynureninase (497 aa).

The disordered stretch occupies residues 59–86 (GRLPAYPPNHAKPGETATAQNGTSNTND). Polar residues predominate over residues 75 to 86 (ATAQNGTSNTND). Pyridoxal 5'-phosphate is bound by residues L166, T167, 194–197 (FPSD), D278, H281, and Y303. Residue K304 is modified to N6-(pyridoxal phosphate)lysine. Residues W337 and N365 each contribute to the pyridoxal 5'-phosphate site.

Belongs to the kynureninase family. Homodimer. Requires pyridoxal 5'-phosphate as cofactor.

It is found in the cytoplasm. The catalysed reaction is L-kynurenine + H2O = anthranilate + L-alanine + H(+). The enzyme catalyses 3-hydroxy-L-kynurenine + H2O = 3-hydroxyanthranilate + L-alanine + H(+). It participates in amino-acid degradation; L-kynurenine degradation; L-alanine and anthranilate from L-kynurenine: step 1/1. Its pathway is cofactor biosynthesis; NAD(+) biosynthesis; quinolinate from L-kynurenine: step 2/3. Catalyzes the cleavage of L-kynurenine (L-Kyn) and L-3-hydroxykynurenine (L-3OHKyn) into anthranilic acid (AA) and 3-hydroxyanthranilic acid (3-OHAA), respectively. The sequence is that of Kynureninase from Pyricularia oryzae (strain 70-15 / ATCC MYA-4617 / FGSC 8958) (Rice blast fungus).